The chain runs to 100 residues: uncharacterized protein (100 aa).

The N-terminal stretch at 1 to 23 (MKYVALAFVLSLVILQISAQVGA) is a signal peptide.

In terms of tissue distribution, nacreous layer of shell (at protein level). Expressed primarily in the mantle with highest level in the mantle pallium and lower level in the mantle edge.

Its subcellular location is the secreted. This is an uncharacterized protein from Margaritifera margaritifera (Freshwater pearl mussel).